The chain runs to 210 residues: Somatotropin (210 aa).

The N-terminal stretch at 1–22 is a signal peptide; sequence MAKALVLLSLVLVSVFVNNGTA. A Zn(2+)-binding site is contributed by H38. A disulfide bridge connects residues C71 and C183. E192 provides a ligand contact to Zn(2+). Residues C200 and C208 are joined by a disulfide bond.

The protein belongs to the somatotropin/prolactin family.

The protein localises to the secreted. Its function is as follows. Growth hormone plays an important role in growth control and is involved in the regulation of several anabolic processes. Implicated as an osmoregulatory substance important for seawater adaptation. This is Somatotropin (gh) from Misgurnus mizolepis (Chinese weatherloach).